Consider the following 400-residue polypeptide: Methylthioribose kinase (400 aa).

ATP is bound by residues N44, K61, and 115 to 117; that span reads EDL. A substrate-binding site is contributed by D233. 250–252 is an ATP binding site; it reads DPE. Position 340 (R340) interacts with substrate.

Belongs to the methylthioribose kinase family. In terms of assembly, homodimer.

It carries out the reaction 5-(methylsulfanyl)-D-ribose + ATP = 5-(methylsulfanyl)-alpha-D-ribose 1-phosphate + ADP + H(+). It functions in the pathway amino-acid biosynthesis; L-methionine biosynthesis via salvage pathway; S-methyl-5-thio-alpha-D-ribose 1-phosphate from S-methyl-5'-thioadenosine (hydrolase route): step 2/2. Functionally, catalyzes the phosphorylation of methylthioribose into methylthioribose-1-phosphate. The chain is Methylthioribose kinase from Geobacillus sp. (strain WCH70).